A 386-amino-acid chain; its full sequence is MKILLLGSGELGKEFAIAAQRIGQTIIAVDNYPNAPAMQVAHQFEVINMLDGSELDRIVAKHQPDFIVPEIEAIRTERFYEYEKQGITVVPSAKAANFTMNRKAIRDLAAKELGLKTANYRYATSAEELQKGVQAVGMPCVVKPLMSSSGKGQSTIKTVEDIEKAWNYAVEGSRGDVVEVIVEAFVKFNSEITLLTVAQNNNPTLFCAPIGHRQERGDYQESWQPARISDKDLHEAQDMARKVTEALGGAGLFGVEFFLTNDGVYFSELSPRPHDTGMVTLAGTQNFNEFELHLRAILSLPIFDITLEKAGARAVILASENSNNPTYSGIENIACLPKSDFRIFGKPTSRPYRRMGVVLTNDTLETPIEEIVTRAKKMATLVKVNL.

N(1)-(5-phospho-beta-D-ribosyl)glycinamide-binding positions include 10 to 11 and Glu70; that span reads EL. ATP-binding positions include Arg102, Lys143, 148-153, 183-186, and Glu191; these read SSGKGQ and EAFV. Positions 107–298 constitute an ATP-grasp domain; that stretch reads DLAAKELGLK…EFELHLRAIL (192 aa). The Mg(2+) site is built by Glu256 and Glu268. N(1)-(5-phospho-beta-D-ribosyl)glycinamide-binding positions include Asp275, Lys346, and 353-354; that span reads RR.

It belongs to the PurK/PurT family. Homodimer.

The catalysed reaction is N(1)-(5-phospho-beta-D-ribosyl)glycinamide + formate + ATP = N(2)-formyl-N(1)-(5-phospho-beta-D-ribosyl)glycinamide + ADP + phosphate + H(+). It functions in the pathway purine metabolism; IMP biosynthesis via de novo pathway; N(2)-formyl-N(1)-(5-phospho-D-ribosyl)glycinamide from N(1)-(5-phospho-D-ribosyl)glycinamide (formate route): step 1/1. Functionally, involved in the de novo purine biosynthesis. Catalyzes the transfer of formate to 5-phospho-ribosyl-glycinamide (GAR), producing 5-phospho-ribosyl-N-formylglycinamide (FGAR). Formate is provided by PurU via hydrolysis of 10-formyl-tetrahydrofolate. The protein is Formate-dependent phosphoribosylglycinamide formyltransferase of Flavobacterium psychrophilum (strain ATCC 49511 / DSM 21280 / CIP 103535 / JIP02/86).